A 115-amino-acid polypeptide reads, in one-letter code: Probable 4-amino-4-deoxy-L-arabinose-phosphoundecaprenol flippase subunit ArnE (115 aa).

Transmembrane regions (helical) follow at residues 42-62, 65-85, and 93-112; these read PWPW…LLLL, VEVG…TLVA, and VDRR…ALLG. One can recognise an EamA domain in the interval 46–113; the sequence is LALLALGLGL…IVAGVALLGR (68 aa).

This sequence belongs to the ArnE family. In terms of assembly, heterodimer of ArnE and ArnF.

It is found in the cell inner membrane. Its pathway is bacterial outer membrane biogenesis; lipopolysaccharide biosynthesis. Functionally, translocates 4-amino-4-deoxy-L-arabinose-phosphoundecaprenol (alpha-L-Ara4N-phosphoundecaprenol) from the cytoplasmic to the periplasmic side of the inner membrane. This Pseudomonas paraeruginosa (strain DSM 24068 / PA7) (Pseudomonas aeruginosa (strain PA7)) protein is Probable 4-amino-4-deoxy-L-arabinose-phosphoundecaprenol flippase subunit ArnE.